A 20-amino-acid polypeptide reads, in one-letter code: Equinatoxin-3 (20 aa).

Residues 3 to 12 (AVAGAIIKGA) are plays an important role in the hemolytic activity. Residues 11-20 (GAALTFNVLQ) form an N-terminal region region.

The protein belongs to the actinoporin family. Sea anemone subfamily. Octamer or nonamer in membranes. Monomer in the soluble state.

The protein resides in the secreted. Its subcellular location is the nematocyst. The protein localises to the target cell membrane. In terms of biological role, pore-forming protein that forms cations-selective hydrophilic pores of around 1 nm and causes cardiac stimulation and cytolysis. Pore formation is a multi-step process that involves specific recognition of membrane sphingomyelin (but neither cholesterol nor phosphatidylcholine) using aromatic rich region and adjacent phosphocholine (POC) binding site, firm binding to the membrane (mainly driven by hydrophobic interactions) accompanied by the transfer of the N-terminal region to the lipid-water interface and finally pore formation after oligomerization of monomers. Cytolytic effects include red blood cells hemolysis, platelet aggregation and lysis, cytotoxic and cytostatic effects on fibroblasts. Lethality in mammals has been ascribed to severe vasospasm of coronary vessels, cardiac arrhythmia, and inotropic effects. The chain is Equinatoxin-3 from Actinia equina (Beadlet anemone).